The following is a 386-amino-acid chain: Na(+)/H(+) antiporter NhaA (386 aa).

11 helical membrane passes run 11–31, 60–80, 96–116, 126–146, 155–175, 180–200, 218–238, 260–280, 293–313, 326–346, and 358–378; these read NDAT…FLAN, LLLW…GLEV, MFPL…YAAF, GWAI…ALLG, MFLM…IALF, LSLI…VLNG, VAVL…GLFI, VSWL…LSGV, ITLG…WLAV, LIDI…SIFI, and LVTL…LVGY.

Belongs to the NhaA Na(+)/H(+) (TC 2.A.33) antiporter family.

Its subcellular location is the cell inner membrane. The enzyme catalyses Na(+)(in) + 2 H(+)(out) = Na(+)(out) + 2 H(+)(in). In terms of biological role, na(+)/H(+) antiporter that extrudes sodium in exchange for external protons. This Erwinia tasmaniensis (strain DSM 17950 / CFBP 7177 / CIP 109463 / NCPPB 4357 / Et1/99) protein is Na(+)/H(+) antiporter NhaA.